We begin with the raw amino-acid sequence, 513 residues long: Tigger transposable element-derived protein 4 (513 aa).

The region spanning 12–63 is the HTH psq-type domain; sequence PVTVKKKKSLSIEEKIDIINAVESGKKKAEIAAEYGIKKNSLSSIMKNKDKV. 2 DNA-binding regions (H-T-H motif) span residues 39–59 and 108–139; these read KAEIAAEYGIKKNSLSSIMKN and PMLRLKANDFAQKLGHNDFKCSNGWLDRFKSR. In terms of domain architecture, HTH CENPB-type spans 75-146; that stretch reads KRKRLRTAFY…KSRYGLVFRA (72 aa). The 202-residue stretch at 174-375 folds into the DDE-1 domain; the sequence is YHPKNVFNVK…VTPETIVKSY (202 aa). Over residues 433–448 the composition is skewed to basic and acidic residues; that stretch reads TQKDDAEWAGESKQDE. Residues 433-473 are disordered; sequence TQKDDAEWAGESKQDETGLYTSDEEEEDSGALEVDLPSPSK.

The protein belongs to the tigger transposable element derived protein family.

The protein localises to the nucleus. The chain is Tigger transposable element-derived protein 4 (Tigd4) from Mus musculus (Mouse).